The sequence spans 145 residues: uncharacterized protein (145 aa).

The first 23 residues, 1–23, serve as a signal peptide directing secretion; it reads MSSSNLSSRKTRISAHFLDAAPA. Residues 123–140 form a helical membrane-spanning segment; that stretch reads VLLLIIALVFLLFVAIFI.

It is found in the membrane. This is an uncharacterized protein from Archaeoglobus fulgidus (strain ATCC 49558 / DSM 4304 / JCM 9628 / NBRC 100126 / VC-16).